The following is a 129-amino-acid chain: Small ribosomal subunit protein uS11c (129 aa).

The protein belongs to the universal ribosomal protein uS11 family. Part of the 30S ribosomal subunit.

It is found in the plastid. Its subcellular location is the chloroplast. This Cyanidium caldarium (Red alga) protein is Small ribosomal subunit protein uS11c.